The following is a 400-amino-acid chain: Acetate kinase (400 aa).

Asparagine 9 contacts Mg(2+). Lysine 16 serves as a coordination point for ATP. Arginine 90 serves as a coordination point for substrate. Aspartate 147 acts as the Proton donor/acceptor in catalysis. Residues 207-211 (HIGNG), 282-284 (DLR), and 330-334 (GIGEN) contribute to the ATP site. Glutamate 385 is a binding site for Mg(2+).

Belongs to the acetokinase family. In terms of assembly, homodimer. Mg(2+) is required as a cofactor. Requires Mn(2+) as cofactor.

The protein localises to the cytoplasm. The enzyme catalyses acetate + ATP = acetyl phosphate + ADP. It functions in the pathway metabolic intermediate biosynthesis; acetyl-CoA biosynthesis; acetyl-CoA from acetate: step 1/2. Its function is as follows. Catalyzes the formation of acetyl phosphate from acetate and ATP. Can also catalyze the reverse reaction. This chain is Acetate kinase, found in Staphylococcus aureus (strain USA300).